Here is a 345-residue protein sequence, read N- to C-terminus: MENEEIPEFLSPKEEIVYWRELSKRLKQSYQEARDELIEFQEGSRELEAELETQLVQAEQRNRDLLSDNQRLKCEVESLKEKLEHQYAQSYKQVSLLEDELARARSIKDQLHKYVRELEQANDDLERAKRATIVSLEDFEQRLNQAIERNAFLESELDEKESLLVSVQRLKDEARDLRQELAVRERQTDGTRKSAPSSPTLDCDKTDSAVQASLSLPATPVGKICDNSFTSPKGIPNGFGTTPLTPSARISALNIVGDLLRKVGALESKLAACRNFAKDQASRKSYTPVNLNSNSSSSVLNSSGVKYSHAGHTSFFDKGAVNGYEPPGVLGSRPPSPPGMLPLSV.

Residues tryptophan 19–glycine 190 adopt a coiled-coil conformation. Over residues alanine 182–arginine 192 the composition is skewed to basic and acidic residues. Disordered regions lie at residues alanine 182–threonine 206 and proline 326–valine 345. Positions proline 334 to valine 345 are enriched in pro residues.

It belongs to the nudE family. Phosphorylated in mitosis.

It is found in the cytoplasm. Its subcellular location is the cytoskeleton. The protein resides in the microtubule organizing center. The protein localises to the centrosome. It localises to the spindle. In terms of biological role, required for organization of the cellular microtubule array and microtubule anchoring at the centrosome. Positively regulates the activity of the minus-end directed microtubule motor protein dynein. May enhance dynein-mediated microtubule sliding by targeting dynein to the microtubule plus end. Positively regulates lysosome peripheral distribution and ruffled border formation in osteoclasts. The protein is Nuclear distribution protein nudE-like 1-A (ndel1-a) of Xenopus laevis (African clawed frog).